The sequence spans 352 residues: S-adenosylmethionine:tRNA ribosyltransferase-isomerase (352 aa).

The protein belongs to the QueA family. In terms of assembly, monomer.

The protein resides in the cytoplasm. It carries out the reaction 7-aminomethyl-7-carbaguanosine(34) in tRNA + S-adenosyl-L-methionine = epoxyqueuosine(34) in tRNA + adenine + L-methionine + 2 H(+). It participates in tRNA modification; tRNA-queuosine biosynthesis. Its function is as follows. Transfers and isomerizes the ribose moiety from AdoMet to the 7-aminomethyl group of 7-deazaguanine (preQ1-tRNA) to give epoxyqueuosine (oQ-tRNA). In Paraburkholderia xenovorans (strain LB400), this protein is S-adenosylmethionine:tRNA ribosyltransferase-isomerase.